Reading from the N-terminus, the 177-residue chain is MSVADTIARPYAQAIFEIAIENNTIEKWKNILIFIKTIASHKKFKNFLSGSISPKYLSLIFITIGTNIIDENAKNLIKLLSENQRFNILNNIFERFVKLEACYKNIIIVQLKSAFSLKENHINKIRKVLERFFLKKTKIIYKVDPNILNGMIVKVNNTIFDLSAQNHLKQLSDSLNF.

It belongs to the ATPase delta chain family. F-type ATPases have 2 components, F(1) - the catalytic core - and F(0) - the membrane proton channel. F(1) has five subunits: alpha(3), beta(3), gamma(1), delta(1), epsilon(1). F(0) has three main subunits: a(1), b(2) and c(10-14). The alpha and beta chains form an alternating ring which encloses part of the gamma chain. F(1) is attached to F(0) by a central stalk formed by the gamma and epsilon chains, while a peripheral stalk is formed by the delta and b chains.

The protein resides in the cell membrane. In terms of biological role, f(1)F(0) ATP synthase produces ATP from ADP in the presence of a proton or sodium gradient. F-type ATPases consist of two structural domains, F(1) containing the extramembraneous catalytic core and F(0) containing the membrane proton channel, linked together by a central stalk and a peripheral stalk. During catalysis, ATP synthesis in the catalytic domain of F(1) is coupled via a rotary mechanism of the central stalk subunits to proton translocation. Functionally, this protein is part of the stalk that links CF(0) to CF(1). It either transmits conformational changes from CF(0) to CF(1) or is implicated in proton conduction. In Buchnera aphidicola subsp. Acyrthosiphon pisum (strain 5A), this protein is ATP synthase subunit delta.